Reading from the N-terminus, the 206-residue chain is Thymidylate kinase (206 aa).

14 to 21 (GGEGIGKS) contacts ATP.

This sequence belongs to the thymidylate kinase family.

The catalysed reaction is dTMP + ATP = dTDP + ADP. Its function is as follows. Phosphorylation of dTMP to form dTDP in both de novo and salvage pathways of dTTP synthesis. The sequence is that of Thymidylate kinase from Rickettsia bellii (strain RML369-C).